Reading from the N-terminus, the 172-residue chain is Adenine phosphoribosyltransferase (172 aa).

Belongs to the purine/pyrimidine phosphoribosyltransferase family. As to quaternary structure, homodimer.

The protein resides in the cytoplasm. It carries out the reaction AMP + diphosphate = 5-phospho-alpha-D-ribose 1-diphosphate + adenine. It participates in purine metabolism; AMP biosynthesis via salvage pathway; AMP from adenine: step 1/1. Functionally, catalyzes a salvage reaction resulting in the formation of AMP, that is energically less costly than de novo synthesis. This chain is Adenine phosphoribosyltransferase, found in Herpetosiphon aurantiacus (strain ATCC 23779 / DSM 785 / 114-95).